A 721-amino-acid polypeptide reads, in one-letter code: 1,4-alpha-glucan branching enzyme GlgB (721 aa).

The active-site Nucleophile is D404. The active-site Proton donor is the E457.

This sequence belongs to the glycosyl hydrolase 13 family. GlgB subfamily. In terms of assembly, monomer.

It carries out the reaction Transfers a segment of a (1-&gt;4)-alpha-D-glucan chain to a primary hydroxy group in a similar glucan chain.. It participates in glycan biosynthesis; glycogen biosynthesis. Catalyzes the formation of the alpha-1,6-glucosidic linkages in glycogen by scission of a 1,4-alpha-linked oligosaccharide from growing alpha-1,4-glucan chains and the subsequent attachment of the oligosaccharide to the alpha-1,6 position. The polypeptide is 1,4-alpha-glucan branching enzyme GlgB (Novosphingobium aromaticivorans (strain ATCC 700278 / DSM 12444 / CCUG 56034 / CIP 105152 / NBRC 16084 / F199)).